The following is a 98-amino-acid chain: MFEQNLTSEALTVTTVTSQDQITQKPLRDSVKASLKNYLAQLNGQEVSELYELVLAEVEQPLLDTIMQYTRGNQTRAATMMGINRGTLRKKLKKYGMN.

Residues 74 to 93 (QTRAATMMGINRGTLRKKLK) constitute a DNA-binding region (H-T-H motif).

Belongs to the transcriptional regulatory Fis family. As to quaternary structure, homodimer.

Functionally, activates ribosomal RNA transcription. Plays a direct role in upstream activation of rRNA promoters. In Vibrio atlanticus (strain LGP32) (Vibrio splendidus (strain Mel32)), this protein is DNA-binding protein Fis.